The chain runs to 297 residues: Probable tyrosine phosphatase protein J2 (297 aa).

Positions 21 to 286 (DSLSCIIQEY…VFCYHLIHAY (266 aa)) constitute a Tyrosine-protein phosphatase domain. Cys-227 functions as the Phosphocysteine intermediate in the catalytic mechanism.

This sequence belongs to the protein-tyrosine phosphatase family.

The catalysed reaction is O-phospho-L-tyrosyl-[protein] + H2O = L-tyrosyl-[protein] + phosphate. The polypeptide is Probable tyrosine phosphatase protein J2 (J3) (Microplitis demolitor (Parasitoid wasp)).